The chain runs to 149 residues: Ribonuclease pancreatic (149 aa).

The signal sequence occupies residues 1–25 (MGLEKSLILLPLLVLVLAWVQPSLG). Lysine 32 and arginine 35 together coordinate substrate. Histidine 37 serves as the catalytic Proton acceptor. 4 disulfides stabilise this stretch: cysteine 51/cysteine 109, cysteine 65/cysteine 120, cysteine 83/cysteine 135, and cysteine 90/cysteine 97. Residue 66-70 (KRVNT) participates in substrate binding. Asparagine 87 carries an N-linked (GlcNAc...) asparagine glycan. Residues lysine 91 and arginine 110 each contribute to the substrate site. Histidine 144 (proton donor) is an active-site residue.

This sequence belongs to the pancreatic ribonuclease family. In terms of assembly, monomer. Interacts with and forms tight 1:1 complexes with RNH1. Dimerization of two such complexes may occur. Interaction with RNH1 inhibits this protein. Pancreas.

It localises to the secreted. It catalyses the reaction an [RNA] containing cytidine + H2O = an [RNA]-3'-cytidine-3'-phosphate + a 5'-hydroxy-ribonucleotide-3'-[RNA].. The catalysed reaction is an [RNA] containing uridine + H2O = an [RNA]-3'-uridine-3'-phosphate + a 5'-hydroxy-ribonucleotide-3'-[RNA].. Endonuclease that catalyzes the cleavage of RNA on the 3' side of pyrimidine nucleotides. Acts on single-stranded and double-stranded RNA. This Acomys cahirinus (Cairo spiny mouse) protein is Ribonuclease pancreatic (RNASE1).